Here is a 486-residue protein sequence, read N- to C-terminus: Ribulose bisphosphate carboxylase large chain (486 aa).

Residues asparagine 125 and threonine 175 each contribute to the substrate site. The Proton acceptor role is filled by lysine 177. Lysine 179 serves as a coordination point for substrate. Mg(2+)-binding residues include lysine 203, aspartate 205, and glutamate 206. N6-carboxylysine is present on lysine 203. Histidine 295 (proton acceptor) is an active-site residue. Substrate is bound by residues arginine 296, histidine 328, and serine 380.

Belongs to the RuBisCO large chain family. Type I subfamily. As to quaternary structure, heterohexadecamer of 8 large chains and 8 small chains. Mg(2+) is required as a cofactor.

The enzyme catalyses 2 (2R)-3-phosphoglycerate + 2 H(+) = D-ribulose 1,5-bisphosphate + CO2 + H2O. It catalyses the reaction D-ribulose 1,5-bisphosphate + O2 = 2-phosphoglycolate + (2R)-3-phosphoglycerate + 2 H(+). Its function is as follows. RuBisCO catalyzes two reactions: the carboxylation of D-ribulose 1,5-bisphosphate, the primary event in carbon dioxide fixation, as well as the oxidative fragmentation of the pentose substrate. Both reactions occur simultaneously and in competition at the same active site. In Aurantimonas manganoxydans (strain ATCC BAA-1229 / DSM 21871 / SI85-9A1), this protein is Ribulose bisphosphate carboxylase large chain.